Consider the following 232-residue polypeptide: Putative quercetin 2,3-dioxygenase PA1210 (232 aa).

His-57, His-59, His-101, and Glu-103 together coordinate a divalent metal cation.

This sequence belongs to the pirin family. The cofactor is a divalent metal cation.

The catalysed reaction is quercetin + O2 = 2-(3,4-dihydroxybenzoyloxy)-4,6-dihydroxybenzoate + CO. It participates in flavonoid metabolism; quercetin degradation. Putative quercetin 2,3-dioxygenase. This chain is Putative quercetin 2,3-dioxygenase PA1210, found in Pseudomonas aeruginosa (strain ATCC 15692 / DSM 22644 / CIP 104116 / JCM 14847 / LMG 12228 / 1C / PRS 101 / PAO1).